The following is a 508-amino-acid chain: Beta-glucosidase 10 (508 aa).

An N-terminal signal peptide occupies residues 1 to 22 (MKLYSLLSVFLVILLATSDSDA). Residues Gln-42, His-142, and 187–188 (NE) each bind a beta-D-glucoside. Residue Glu-188 is the Proton donor of the active site. The cysteines at positions 207 and 215 are disulfide-linked. 2 N-linked (GlcNAc...) asparagine glycosylation sites follow: Asn-214 and Asn-219. Tyr-331 serves as a coordination point for a beta-D-glucoside. Asn-365 carries an N-linked (GlcNAc...) asparagine glycan. Glu-398 contributes to the a beta-D-glucoside binding site. The Nucleophile role is filled by Glu-398. Residue Asn-431 is glycosylated (N-linked (GlcNAc...) asparagine). 2 residues coordinate a beta-D-glucoside: Trp-441 and Phe-457. Asn-463, Asn-485, and Asn-501 each carry an N-linked (GlcNAc...) asparagine glycan.

This sequence belongs to the glycosyl hydrolase 1 family.

It carries out the reaction Hydrolysis of terminal, non-reducing beta-D-glucosyl residues with release of beta-D-glucose.. The sequence is that of Beta-glucosidase 10 from Arabidopsis thaliana (Mouse-ear cress).